The chain runs to 88 residues: Probable Fe(2+)-trafficking protein (88 aa).

Belongs to the Fe(2+)-trafficking protein family.

In terms of biological role, could be a mediator in iron transactions between iron acquisition and iron-requiring processes, such as synthesis and/or repair of Fe-S clusters in biosynthetic enzymes. In Alkalilimnicola ehrlichii (strain ATCC BAA-1101 / DSM 17681 / MLHE-1), this protein is Probable Fe(2+)-trafficking protein.